Here is a 29-residue protein sequence, read N- to C-terminus: Beta-theraphotoxin-Gr1b (29 aa).

Intrachain disulfides connect C2-C16, C9-C21, and C15-C25. A Leucine amide modification is found at L29.

This sequence belongs to the neurotoxin 30 (phrixotoxin) family. Expressed by the venom gland.

It localises to the secreted. Functionally, inhibits the voltage-gated sodium channels Nav1.1/SCN1A (IC(50)=360 nM), Nav1.2/SCN2A (IC(50)=600 nM), Nav1.3/SCN3A (IC(50)=1280), Nav1.4/SCN4A (IC(50)=330 nM), Nav1.6/SCN8A (IC(50)=1200 nM), Nav1.7/SCN9A (IC(50)=1-40 nM), and voltage-gated potassium channels Kv11.1/KCNH2 (IC(50)=4.8 uM). Induces analgesia in mammals. This analgesia is mediated by a non-opioid receptor related mechanism. The chain is Beta-theraphotoxin-Gr1b from Grammostola rosea (Chilean rose tarantula).